A 699-amino-acid chain; its full sequence is D-(-)-3-hydroxybutyrate oligomer hydrolase (699 aa).

An N-terminal signal peptide occupies residues 1–33 (MTAIRGGSRRAPGLALALLGGVLLGACHGDENA). The active-site Charge relay system is the Ser-311.

This sequence belongs to the D-(-)-3-hydroxybutyrate oligomer hydrolase family.

Its subcellular location is the secreted. The enzyme catalyses (3R)-hydroxybutanoate dimer + H2O = 2 (R)-3-hydroxybutanoate + H(+). Its pathway is lipid metabolism; butanoate metabolism. Participates in the degradation of poly-3-hydroxybutyrate (PHB). It works downstream of poly(3-hydroxybutyrate) depolymerase, hydrolyzing D(-)-3-hydroxybutyrate oligomers of various length (3HB-oligomers) into 3HB-monomers. This chain is D-(-)-3-hydroxybutyrate oligomer hydrolase, found in Burkholderia mallei (strain NCTC 10247).